Consider the following 368-residue polypeptide: uncharacterized protein (368 aa).

Transmembrane regions (helical) follow at residues 22 to 42 (VAGIPLYKIIIASAIMLFTLI), 74 to 94 (FVKPFSYFIVVFGFYLSLLVL), 104 to 124 (FLKTFSLLILGWAIIRFLNLF), 144 to 164 (VGDFILKILKAFVVVIVGASL), and 168 to 188 (WGVNIGAILASVGLLGLAVSL).

It belongs to the MscS (TC 1.A.23) family.

Its subcellular location is the cell membrane. This is an uncharacterized protein from Aquifex aeolicus (strain VF5).